The sequence spans 194 residues: Peptidyl-tRNA hydrolase (194 aa).

Residue Tyr-17 participates in tRNA binding. His-22 functions as the Proton acceptor in the catalytic mechanism. The tRNA site is built by Tyr-68, Asn-70, and Asn-116.

The protein belongs to the PTH family. As to quaternary structure, monomer.

The protein resides in the cytoplasm. The enzyme catalyses an N-acyl-L-alpha-aminoacyl-tRNA + H2O = an N-acyl-L-amino acid + a tRNA + H(+). Its function is as follows. Hydrolyzes ribosome-free peptidyl-tRNAs (with 1 or more amino acids incorporated), which drop off the ribosome during protein synthesis, or as a result of ribosome stalling. Catalyzes the release of premature peptidyl moieties from peptidyl-tRNA molecules trapped in stalled 50S ribosomal subunits, and thus maintains levels of free tRNAs and 50S ribosomes. This is Peptidyl-tRNA hydrolase from Pseudomonas aeruginosa (strain LESB58).